Consider the following 214-residue polypeptide: Dynein axonemal assembly factor 6 (214 aa).

2 disordered regions span residues 1–22 (MESE…QNVD) and 34–68 (ALSK…NIGP).

Belongs to the PIH1 family. In terms of assembly, interacts with HSPA1A/B and HSP90AA1. Interacts with DNAAF2 and DNAAF4. Interacts wuth DNAI2. In terms of tissue distribution, expressed in testis, small intestine, prostate, adrenal gland, spleen, lung, bladder, breast and ovary. Expressed in ciliated epithelial cells.

It is found in the cytoplasm. The protein localises to the golgi apparatus. It localises to the trans-Golgi network. Functionally, plays a role in cytoplasmic pre-assembly of axonemal dynein. The chain is Dynein axonemal assembly factor 6 from Homo sapiens (Human).